The sequence spans 387 residues: Zinc homeostasis factor 1 (387 aa).

4 helical membrane passes run 10–30 (IILL…TGYA), 34–54 (LALI…LVAL), 77–97 (EILG…FIFM), and 113–133 (TLMF…IFLF). The segment covering 195–214 (SYTGNHNGAGTSKPVNNHGS) has biased composition (polar residues). The segment at 195 to 221 (SYTGNHNGAGTSKPVNNHGSIEQDAPK) is disordered. Transmembrane regions (helical) follow at residues 234 to 254 (FLHV…ALFI) and 263 to 283 (FLFD…SAIP).

Belongs to the cation diffusion facilitator (CDF) transporter (TC 2.A.4) family. SLC30A subfamily.

It localises to the endoplasmic reticulum membrane. The protein localises to the nucleus membrane. In terms of biological role, involved in zinc homeostasis, where it plays a role in its accumulation in the endoplasmic reticulum/nucleus. Also has a role in the sequestration of cadmium into the endoplasmic reticulum. This is Zinc homeostasis factor 1 (zhf1) from Schizosaccharomyces pombe (strain 972 / ATCC 24843) (Fission yeast).